Here is a 171-residue protein sequence, read N- to C-terminus: ATP synthase subunit b (171 aa).

A helical transmembrane segment spans residues 24–44; it reads INLVIVIGVLYWFLKGFLGGI.

Belongs to the ATPase B chain family. In terms of assembly, F-type ATPases have 2 components, F(1) - the catalytic core - and F(0) - the membrane proton channel. F(1) has five subunits: alpha(3), beta(3), gamma(1), delta(1), epsilon(1). F(0) has four main subunits: a(1), b(1), b'(1) and c(10-14). The alpha and beta chains form an alternating ring which encloses part of the gamma chain. F(1) is attached to F(0) by a central stalk formed by the gamma and epsilon chains, while a peripheral stalk is formed by the delta, b and b' chains.

Its subcellular location is the cellular thylakoid membrane. Its function is as follows. F(1)F(0) ATP synthase produces ATP from ADP in the presence of a proton or sodium gradient. F-type ATPases consist of two structural domains, F(1) containing the extramembraneous catalytic core and F(0) containing the membrane proton channel, linked together by a central stalk and a peripheral stalk. During catalysis, ATP synthesis in the catalytic domain of F(1) is coupled via a rotary mechanism of the central stalk subunits to proton translocation. Functionally, component of the F(0) channel, it forms part of the peripheral stalk, linking F(1) to F(0). The protein is ATP synthase subunit b of Synechococcus sp. (strain WH7803).